The primary structure comprises 148 residues: Putative cyclin-dependent kinase inhibitor SPL2 (148 aa).

A phosphoserine mark is found at Ser59 and Ser86.

Its subcellular location is the cytoplasmic granule. It is found in the cytoplasm. Functionally, putative cyclin-dependent kinase (CDK) inhibitor necessary and sufficient for PHO pathway-dependent down-regulation of low-affinity phosphate transport. The polypeptide is Putative cyclin-dependent kinase inhibitor SPL2 (SPL2) (Saccharomyces cerevisiae (strain ATCC 204508 / S288c) (Baker's yeast)).